Reading from the N-terminus, the 172-residue chain is Biogenesis of lysosome-related organelles complex 1 subunit 6 (172 aa).

Disordered stretches follow at residues M1–E36 and R135–M172. Residues D63–R167 adopt a coiled-coil conformation. Over residues R143–L164 the composition is skewed to basic and acidic residues.

Belongs to the BLOC1S6 family. As to quaternary structure, interacts with BLOC1S4 and DTNBP1/BLOC1S7. Homodimer. Component of the biogenesis of lysosome-related organelles complex 1 (BLOC-1) composed of BLOC1S1, BLOC1S2, BLOC1S3, BLOC1S4, BLOC1S5, BLOC1S6, DTNBP1/BLOC1S7 and SNAPIN/BLOC1S8. Octamer composed of one copy each BLOC1S1, BLOC1S2, BLOC1S3, BLOC1S4, BLOC1S5, BLOC1S6, DTNBP1/BLOC1S7 and SNAPIN/BLOC1S8. The BLOC-1 complex associates with the AP-3 protein complex and membrane protein cargos. Interacts with BLOC1S5, F-actin, SNAP25 isoform 1 and isoform 2, SNAP47 and STX12. In terms of processing, phosphorylated. As to expression, widely expressed.

It localises to the cytoplasm. The protein localises to the membrane. In terms of biological role, component of the BLOC-1 complex, a complex that is required for normal biogenesis of lysosome-related organelles (LRO), such as platelet dense granules and melanosomes. In concert with the AP-3 complex, the BLOC-1 complex is required to target membrane protein cargos into vesicles assembled at cell bodies for delivery into neurites and nerve terminals. The BLOC-1 complex, in association with SNARE proteins, is also proposed to be involved in neurite extension. May play a role in intracellular vesicle trafficking, particularly in the vesicle-docking and fusion process. This is Biogenesis of lysosome-related organelles complex 1 subunit 6 (BLOC1S6) from Homo sapiens (Human).